A 169-amino-acid chain; its full sequence is Peptide deformylase (169 aa).

Positions 92 and 134 each coordinate Fe cation. E135 is a catalytic residue. H138 lines the Fe cation pocket.

Belongs to the polypeptide deformylase family. Fe(2+) serves as cofactor.

It carries out the reaction N-terminal N-formyl-L-methionyl-[peptide] + H2O = N-terminal L-methionyl-[peptide] + formate. Its function is as follows. Removes the formyl group from the N-terminal Met of newly synthesized proteins. Requires at least a dipeptide for an efficient rate of reaction. N-terminal L-methionine is a prerequisite for activity but the enzyme has broad specificity at other positions. The polypeptide is Peptide deformylase (Cellvibrio japonicus (strain Ueda107) (Pseudomonas fluorescens subsp. cellulosa)).